Reading from the N-terminus, the 193-residue chain is 3-isopropylmalate dehydratase small subunit (193 aa).

This sequence belongs to the LeuD family. LeuD type 1 subfamily. Heterodimer of LeuC and LeuD.

It catalyses the reaction (2R,3S)-3-isopropylmalate = (2S)-2-isopropylmalate. Its pathway is amino-acid biosynthesis; L-leucine biosynthesis; L-leucine from 3-methyl-2-oxobutanoate: step 2/4. Catalyzes the isomerization between 2-isopropylmalate and 3-isopropylmalate, via the formation of 2-isopropylmaleate. In Bacillus thuringiensis subsp. konkukian (strain 97-27), this protein is 3-isopropylmalate dehydratase small subunit.